The sequence spans 341 residues: Sulfate/thiosulfate import ATP-binding protein CysA 2 (341 aa).

The 233-residue stretch at 3–235 folds into the ABC transporter domain; sequence IRLENVVKTF…PNSSFVMRFL (233 aa). 35–42 is a binding site for ATP; it reads GPSGSGKT.

This sequence belongs to the ABC transporter superfamily. Sulfate/tungstate importer (TC 3.A.1.6) family. In terms of assembly, the complex is composed of two ATP-binding proteins (CysA), two transmembrane proteins (CysT and CysW) and a solute-binding protein (CysP).

It is found in the cell inner membrane. The enzyme catalyses sulfate(out) + ATP + H2O = sulfate(in) + ADP + phosphate + H(+). It catalyses the reaction thiosulfate(out) + ATP + H2O = thiosulfate(in) + ADP + phosphate + H(+). Its function is as follows. Part of the ABC transporter complex CysAWTP involved in sulfate/thiosulfate import. Responsible for energy coupling to the transport system. This Agrobacterium fabrum (strain C58 / ATCC 33970) (Agrobacterium tumefaciens (strain C58)) protein is Sulfate/thiosulfate import ATP-binding protein CysA 2.